The sequence spans 782 residues: Endonuclease MutS2 (782 aa).

Position 336–343 (Gly-336–Thr-343) interacts with ATP. The Smr domain maps to Leu-707–Lys-782.

It belongs to the DNA mismatch repair MutS family. MutS2 subfamily. In terms of assembly, homodimer. Binds to stalled ribosomes, contacting rRNA.

In terms of biological role, endonuclease that is involved in the suppression of homologous recombination and thus may have a key role in the control of bacterial genetic diversity. Its function is as follows. Acts as a ribosome collision sensor, splitting the ribosome into its 2 subunits. Detects stalled/collided 70S ribosomes which it binds and splits by an ATP-hydrolysis driven conformational change. Acts upstream of the ribosome quality control system (RQC), a ribosome-associated complex that mediates the extraction of incompletely synthesized nascent chains from stalled ribosomes and their subsequent degradation. Probably generates substrates for RQC. The polypeptide is Endonuclease MutS2 (Staphylococcus aureus (strain COL)).